The sequence spans 109 residues: Ig kappa chain V region K16-167 (109 aa).

The tract at residues 1-23 (ALVMTQTPSPVSAAVGGTVTISC) is framework-1. The segment at 24–35 (QASQSVYSNNLS) is complementarity-determining-1. The framework-2 stretch occupies residues 36–50 (WFQQKPGQPPKLLIY). Positions 51–57 (KASTLAS) are complementarity-determining-2. A framework-3 region spans residues 58–89 (GVPSRFKGSGSGTQFTLPISGVECDDAATYYC). Residues 90-99 (QGTNTGNNIV) are complementarity-determining-3. The framework-4 stretch occupies residues 100–109 (FGTGTEVVVK).

In Oryctolagus cuniculus (Rabbit), this protein is Ig kappa chain V region K16-167.